Here is a 525-residue protein sequence, read N- to C-terminus: Glutamate--cysteine ligase (525 aa).

Belongs to the glutamate--cysteine ligase type 1 family. Type 1 subfamily.

It carries out the reaction L-cysteine + L-glutamate + ATP = gamma-L-glutamyl-L-cysteine + ADP + phosphate + H(+). The protein operates within sulfur metabolism; glutathione biosynthesis; glutathione from L-cysteine and L-glutamate: step 1/2. This is Glutamate--cysteine ligase from Pseudoalteromonas translucida (strain TAC 125).